A 160-amino-acid polypeptide reads, in one-letter code: uncharacterized protein (160 aa).

Positions 1 to 31 (METEKPNTDVKVAQDLEKLKLDEKHKDEKKD) are enriched in basic and acidic residues. Residues 1–160 (METEKPNTDV…DKKDKEHKKE (160 aa)) are disordered. Residues 20–111 (KLDEKHKDEK…KSKLEGKKDK (92 aa)) are a coiled coil. Basic residues predominate over residues 32–42 (KKDKKDKKDKK). Positions 43–160 (DKKEKTPEEI…DKKDKEHKKE (118 aa)) are enriched in basic and acidic residues.

This is an uncharacterized protein from Dictyostelium discoideum (Social amoeba).